Consider the following 419-residue polypeptide: D-amino acid dehydrogenase (419 aa).

Val3–Tyr17 lines the FAD pocket.

It belongs to the DadA oxidoreductase family. It depends on FAD as a cofactor.

It carries out the reaction a D-alpha-amino acid + A + H2O = a 2-oxocarboxylate + AH2 + NH4(+). The protein operates within amino-acid degradation; D-alanine degradation; NH(3) and pyruvate from D-alanine: step 1/1. Functionally, oxidative deamination of D-amino acids. This is D-amino acid dehydrogenase from Acinetobacter baylyi (strain ATCC 33305 / BD413 / ADP1).